An 82-amino-acid chain; its full sequence is MAAGSTGERPFFEIITSIRYWVIHAITLPSIFLAGFLFVSTGLAYDAFGTPRPDAYFQASESKAPVVSQRYEGKSELDLRLK.

Residues 22 to 36 form a helical membrane-spanning segment; sequence VIHAITLPSIFLAGF. Residue histidine 24 participates in heme binding.

It belongs to the PsbE/PsbF family. Heterodimer of an alpha subunit and a beta subunit. PSII is composed of 1 copy each of membrane proteins PsbA, PsbB, PsbC, PsbD, PsbE, PsbF, PsbH, PsbI, PsbJ, PsbK, PsbL, PsbM, PsbT, PsbX, PsbY, PsbZ, Psb30/Ycf12, peripheral proteins PsbO, CyanoQ (PsbQ), PsbU, PsbV and a large number of cofactors. It forms dimeric complexes. It depends on heme b as a cofactor.

It is found in the cellular thylakoid membrane. In terms of biological role, this b-type cytochrome is tightly associated with the reaction center of photosystem II (PSII). PSII is a light-driven water:plastoquinone oxidoreductase that uses light energy to abstract electrons from H(2)O, generating O(2) and a proton gradient subsequently used for ATP formation. It consists of a core antenna complex that captures photons, and an electron transfer chain that converts photonic excitation into a charge separation. The chain is Cytochrome b559 subunit alpha from Synechococcus sp. (strain CC9311).